Consider the following 343-residue polypeptide: MTGLSTLTEASDSRKMVDPYGRTISYLRVSVTDRCDLRCFYCMSEDMTFLPKADLLTLEELDRLCSAFIAKGVRKLRLTGGEPLVRRNVMSLIRSLSRHLGTGALNELTLTTNGSQLARFAAELKDCGVRRINVSLDTLDPAKFREITRWGDIQKVMAGIDAAQAAGLAVKINAVALKNLNDHEIPSLMEWAHGRDMALTLIEVMPMGDIGQSRADQYLPLSMLRARLAGQYTLTDVDDSTGGPARYVKVNETGGKLGFITPMTHNFCESCNRVRITCTGTLHTCLGHEDASDLRRPLRASAGDELLYETIDRAIGLKPKGHDFIIDRHNRPSVSRHMSVTGG.

A Radical SAM core domain is found at 19 to 244 (PYGRTISYLR…TDVDDSTGGP (226 aa)). A GTP-binding site is contributed by Arg28. [4Fe-4S] cluster contacts are provided by Cys35 and Cys39. Tyr41 lines the S-adenosyl-L-methionine pocket. Cys42 is a [4Fe-4S] cluster binding site. Arg77 provides a ligand contact to GTP. Gly81 is a binding site for S-adenosyl-L-methionine. Thr111 lines the GTP pocket. Residue Ser135 participates in S-adenosyl-L-methionine binding. Residue Lys171 coordinates GTP. Met205 provides a ligand contact to S-adenosyl-L-methionine. The [4Fe-4S] cluster site is built by Cys268 and Cys271. 273 to 275 (RVR) is a GTP binding site. Residue Cys285 participates in [4Fe-4S] cluster binding.

The protein belongs to the radical SAM superfamily. MoaA family. As to quaternary structure, monomer and homodimer. It depends on [4Fe-4S] cluster as a cofactor.

It catalyses the reaction GTP + AH2 + S-adenosyl-L-methionine = (8S)-3',8-cyclo-7,8-dihydroguanosine 5'-triphosphate + 5'-deoxyadenosine + L-methionine + A + H(+). Its pathway is cofactor biosynthesis; molybdopterin biosynthesis. Its function is as follows. Catalyzes the cyclization of GTP to (8S)-3',8-cyclo-7,8-dihydroguanosine 5'-triphosphate. The chain is GTP 3',8-cyclase from Nitrobacter hamburgensis (strain DSM 10229 / NCIMB 13809 / X14).